The chain runs to 826 residues: DNA mismatch repair protein MutS (826 aa).

622-629 (GPNMAGKS) is an ATP binding site.

Belongs to the DNA mismatch repair MutS family.

Its function is as follows. This protein is involved in the repair of mismatches in DNA. It is possible that it carries out the mismatch recognition step. This protein has a weak ATPase activity. This Chlamydia abortus (strain DSM 27085 / S26/3) (Chlamydophila abortus) protein is DNA mismatch repair protein MutS.